The chain runs to 338 residues: RNA 3'-terminal phosphate cyclase (338 aa).

ATP is bound by residues Gln103 and 283–287 (YLADQ). His308 (tele-AMP-histidine intermediate) is an active-site residue.

It belongs to the RNA 3'-terminal cyclase family. Type 1 subfamily.

It localises to the cytoplasm. The enzyme catalyses a 3'-end 3'-phospho-ribonucleotide-RNA + ATP = a 3'-end 2',3'-cyclophospho-ribonucleotide-RNA + AMP + diphosphate. Its function is as follows. Catalyzes the conversion of 3'-phosphate to a 2',3'-cyclic phosphodiester at the end of RNA. The mechanism of action of the enzyme occurs in 3 steps: (A) adenylation of the enzyme by ATP; (B) transfer of adenylate to an RNA-N3'P to produce RNA-N3'PP5'A; (C) and attack of the adjacent 2'-hydroxyl on the 3'-phosphorus in the diester linkage to produce the cyclic end product. The biological role of this enzyme is unknown but it is likely to function in some aspects of cellular RNA processing. The protein is RNA 3'-terminal phosphate cyclase of Escherichia coli O139:H28 (strain E24377A / ETEC).